We begin with the raw amino-acid sequence, 192 residues long: Fe/S biogenesis protein NfuA (192 aa).

2 residues coordinate [4Fe-4S] cluster: Cys149 and Cys152.

The protein belongs to the NfuA family. Homodimer. Requires [4Fe-4S] cluster as cofactor.

Involved in iron-sulfur cluster biogenesis. Binds a 4Fe-4S cluster, can transfer this cluster to apoproteins, and thereby intervenes in the maturation of Fe/S proteins. Could also act as a scaffold/chaperone for damaged Fe/S proteins. The polypeptide is Fe/S biogenesis protein NfuA (Shewanella sp. (strain MR-7)).